A 207-amino-acid chain; its full sequence is Ribonuclease HII (207 aa).

The 189-residue stretch at 19 to 207 folds into the RNase H type-2 domain; that stretch reads HCIAGVDEVG…PVKKALGIEE (189 aa). A divalent metal cation-binding residues include Asp-25, Glu-26, and Asp-117.

Belongs to the RNase HII family. The cofactor is Mn(2+). Mg(2+) is required as a cofactor.

It localises to the cytoplasm. It catalyses the reaction Endonucleolytic cleavage to 5'-phosphomonoester.. Endonuclease that specifically degrades the RNA of RNA-DNA hybrids. The chain is Ribonuclease HII from Vibrio vulnificus (strain CMCP6).